The following is a 146-amino-acid chain: Acidic phospholipase A2 C (146 aa).

Positions methionine 1–serine 21 are cleaved as a signal peptide. A propeptide spanning residues asparagine 22–leucine 27 is cleaved from the precursor. Cystine bridges form between cysteine 38-cysteine 98, cysteine 53-cysteine 145, cysteine 55-cysteine 71, cysteine 70-cysteine 126, cysteine 77-cysteine 119, cysteine 87-cysteine 112, and cysteine 105-cysteine 117. Ca(2+) contacts are provided by tyrosine 54, glycine 56, and glycine 58. Histidine 74 is a catalytic residue. Aspartate 75 contacts Ca(2+). Aspartate 120 is an active-site residue.

It belongs to the phospholipase A2 family. Group I subfamily. D49 sub-subfamily. Ca(2+) is required as a cofactor. In terms of tissue distribution, expressed by the venom gland.

The protein resides in the secreted. The catalysed reaction is a 1,2-diacyl-sn-glycero-3-phosphocholine + H2O = a 1-acyl-sn-glycero-3-phosphocholine + a fatty acid + H(+). PLA2 catalyzes the calcium-dependent hydrolysis of the 2-acyl groups in 3-sn-phosphoglycerides. This chain is Acidic phospholipase A2 C, found in Naja sputatrix (Malayan spitting cobra).